Reading from the N-terminus, the 123-residue chain is Small ribosomal subunit protein uS12 (123 aa).

Residue aspartate 89 is modified to 3-methylthioaspartic acid.

The protein belongs to the universal ribosomal protein uS12 family. Part of the 30S ribosomal subunit. Contacts proteins S8 and S17. May interact with IF1 in the 30S initiation complex.

Its function is as follows. With S4 and S5 plays an important role in translational accuracy. Functionally, interacts with and stabilizes bases of the 16S rRNA that are involved in tRNA selection in the A site and with the mRNA backbone. Located at the interface of the 30S and 50S subunits, it traverses the body of the 30S subunit contacting proteins on the other side and probably holding the rRNA structure together. The combined cluster of proteins S8, S12 and S17 appears to hold together the shoulder and platform of the 30S subunit. This chain is Small ribosomal subunit protein uS12, found in Anaeromyxobacter sp. (strain Fw109-5).